A 109-amino-acid chain; its full sequence is uncharacterized protein (109 aa).

The N-terminal stretch at 1–19 is a signal peptide; sequence MKKFALLAGLFVFAPMTWA.

This is an uncharacterized protein from Escherichia coli O6:H1 (strain CFT073 / ATCC 700928 / UPEC).